The following is a 449-amino-acid chain: Alpha-L-fucosidase (449 aa).

An N-terminal signal peptide occupies residues 1–19 (MGLLLLLSLLSACFQPRYA). N-linked (GlcNAc...) asparagine glycans are attached at residues Asn-156, Asn-224, Asn-362, and Asn-375.

It belongs to the glycosyl hydrolase 29 family. In terms of assembly, homotetramer.

It localises to the secreted. The enzyme catalyses an alpha-L-fucoside + H2O = L-fucose + an alcohol. Its function is as follows. Alpha-L-fucosidase is responsible for hydrolyzing the alpha-1,6-linked fucose joined to the reducing-end N-acetylglucosamine of the carbohydrate moieties of glycoproteins. This is Alpha-L-fucosidase from Branchiostoma floridae (Florida lancelet).